A 65-amino-acid polypeptide reads, in one-letter code: Small ribosomal subunit protein eS17 (65 aa).

The protein belongs to the eukaryotic ribosomal protein eS17 family.

This Archaeoglobus fulgidus (strain ATCC 49558 / DSM 4304 / JCM 9628 / NBRC 100126 / VC-16) protein is Small ribosomal subunit protein eS17.